The following is a 189-amino-acid chain: Imidazoleglycerol-phosphate dehydratase (189 aa).

It belongs to the imidazoleglycerol-phosphate dehydratase family.

Its subcellular location is the cytoplasm. It carries out the reaction D-erythro-1-(imidazol-4-yl)glycerol 3-phosphate = 3-(imidazol-4-yl)-2-oxopropyl phosphate + H2O. It participates in amino-acid biosynthesis; L-histidine biosynthesis; L-histidine from 5-phospho-alpha-D-ribose 1-diphosphate: step 6/9. This Nautilia profundicola (strain ATCC BAA-1463 / DSM 18972 / AmH) protein is Imidazoleglycerol-phosphate dehydratase.